We begin with the raw amino-acid sequence, 188 residues long: NEDD8-conjugating enzyme UBC12 (188 aa).

M1 bears the N-acetylmethionine mark. A compositionally biased stretch (basic residues) spans 1–12; sequence MLKLRQLQKKKQ. Positions 1 to 23 are disordered; the sequence is MLKLRQLQKKKQKENENSSSIQP. The UBC core domain occupies 27–177; that stretch reads AARIRLKRDL…VRLTMSGGSI (151 aa). C115 acts as the Glycyl thioester intermediate in catalysis.

The protein belongs to the ubiquitin-conjugating enzyme family. UBC12 subfamily. As to quaternary structure, interacts with DCN1. The acetylation of Met-1 is cotranslational, and not regulatory. The N-acetylmethionine increases affinity for DCUN1D1 by about 2 orders of magnitude and is crucial for NEDD8 transfer to cullins.

The catalysed reaction is [E1 NEDD8-activating enzyme]-S-[NEDD8 protein]-yl-L-cysteine + [E2 NEDD8-conjugating enzyme]-L-cysteine = [E1 NEDD8-activating enzyme]-L-cysteine + [E2 NEDD8-conjugating enzyme]-S-[NEDD8-protein]-yl-L-cysteine.. The protein operates within protein modification; protein neddylation. Accepts the ubiquitin-like protein NEDD8/RUB1 from the UBA3-ULA1 E1 complex and catalyzes its covalent attachment to other proteins. The major substrate is CDC53/Cullin. This Saccharomyces cerevisiae (strain ATCC 204508 / S288c) (Baker's yeast) protein is NEDD8-conjugating enzyme UBC12 (UBC12).